The chain runs to 398 residues: RNA-binding protein rnc1 (398 aa).

The disordered stretch occupies residues 40 to 78 (KVSIPTPKPSTPLSTLTNGSTIQQSMTNQPEPTSQVPPI). T50 is modified (phosphothreonine). Over residues 57 to 76 (NGSTIQQSMTNQPEPTSQVP) the composition is skewed to polar residues. KH domains follow at residues 93–157 (QLTL…YRFI) and 178–243 (PRKL…IWEI). Residues 274-290 (ASTASPQQVSPPAAPST) show a composition bias toward low complexity. The tract at residues 274–295 (ASTASPQQVSPPAAPSTTSGEA) is disordered. In terms of domain architecture, KH 3 spans 320–385 (KVTQNISIPA…EENEKALFLL (66 aa)).

Phosphorylated by pmk1. Phosphorylation causes enhancement of the RNA-binding activity.

It is found in the cytoplasm. Its function is as follows. Binds and stabilizes pmp1 mRNA and hence acts as a negative regulator of pmk1 signaling. Overexpression suppresses the Cl(-) sensitivity of calcineurin deletion. In Schizosaccharomyces pombe (strain 972 / ATCC 24843) (Fission yeast), this protein is RNA-binding protein rnc1.